A 201-amino-acid polypeptide reads, in one-letter code: ADP-ribosylation factor-like protein 4D (201 aa).

Gly2 carries the N-myristoyl glycine lipid modification. Residues 28–35 (GLDSAGKT), 76–80 (DVGGQ), and 135–138 (NKQD) contribute to the GTP site.

This sequence belongs to the small GTPase superfamily. Arf family. In terms of assembly, interacts with CYTH2; the interaction is direct and ARL4D GTP-dependent. Does not interact with ARL4D.

The protein resides in the nucleus. The protein localises to the nucleolus. It localises to the cell membrane. Its subcellular location is the cytoplasm. Small GTP-binding protein which cycles between an inactive GDP-bound and an active GTP-bound form, and the rate of cycling is regulated by guanine nucleotide exchange factors (GEF) and GTPase-activating proteins (GAP). GTP-binding protein that does not act as an allosteric activator of the cholera toxin catalytic subunit. Recruits CYTH1, CYTH2, CYTH3 and CYTH4 to the plasma membrane in GDP-bound form. The sequence is that of ADP-ribosylation factor-like protein 4D (Arl4d) from Mus musculus (Mouse).